The chain runs to 87 residues: Probable Fe(2+)-trafficking protein (87 aa).

This sequence belongs to the Fe(2+)-trafficking protein family.

In terms of biological role, could be a mediator in iron transactions between iron acquisition and iron-requiring processes, such as synthesis and/or repair of Fe-S clusters in biosynthetic enzymes. This Francisella tularensis subsp. holarctica (strain FTNF002-00 / FTA) protein is Probable Fe(2+)-trafficking protein.